Here is a 314-residue protein sequence, read N- to C-terminus: Homoserine O-acetyltransferase (314 aa).

Catalysis depends on Cys-142, which acts as the Acyl-thioester intermediate. Lys-163 and Ser-192 together coordinate substrate. Catalysis depends on His-235, which acts as the Proton acceptor. Glu-237 is an active-site residue. Substrate is bound at residue Arg-249.

Belongs to the MetA family.

The protein resides in the cytoplasm. The catalysed reaction is L-homoserine + acetyl-CoA = O-acetyl-L-homoserine + CoA. The protein operates within amino-acid biosynthesis; L-methionine biosynthesis via de novo pathway; O-acetyl-L-homoserine from L-homoserine: step 1/1. Its function is as follows. Transfers an acetyl group from acetyl-CoA to L-homoserine, forming acetyl-L-homoserine. The polypeptide is Homoserine O-acetyltransferase (Streptococcus pneumoniae (strain Taiwan19F-14)).